A 315-amino-acid polypeptide reads, in one-letter code: Calcium homeostasis modulator protein 6 (315 aa).

Residues 1 to 21 (MEKFKAVLDLQIKHRSALGYG) are Cytoplasmic-facing. Residues 22–37 (LVTLLTAGGEKIFSTV) traverse the membrane as a helical segment. The Extracellular portion of the chain corresponds to 38 to 46 (VFQCPCTAT). 3 cysteine pairs are disulfide-bonded: Cys41/Cys127, Cys43/Cys156, and Cys140/Cys147. A helical transmembrane segment spans residues 47 to 68 (LNLTYGLVFLLVPALALFLLGY). Residues 69-103 (ALSARTWRLLTGCCSRSASTRSSSGLRSTLVCAQV) lie on the Cytoplasmic side of the membrane. A helical membrane pass occupies residues 104–128 (SAVAALAPLTWVAVALLGGSFYQCA). At 129 to 169 (VSGSTRLASYLCKDRNHSCIAKLPQVPCNKQEAEMQEILSQ) the chain is on the extracellular side. Residues 170–192 (LKAQSQVLGWVLIAAVIFLLLVF) form a helical membrane-spanning segment. Over 193–315 (KCVSRCFSPV…DAAMANTHGV (123 aa)) the chain is Cytoplasmic.

It belongs to the CALHM family. As to quaternary structure, oligomerizes to form decameric and undecameric channels.

The protein resides in the cell membrane. It catalyses the reaction ATP(in) = ATP(out). In terms of biological role, pore-forming subunit of an ATP-permeable channel. In response to pathogen-derived and proinflammatory stimuli, relocates from intracellular compartments to NK-dendritic cell and NK-macrophage immune synapses where it mediates ATP efflux and NK cell activation involved in antimicrobial and antitumor responses. May assemble to form gap junction channel-like structures with gating and ion conductance likely regulated by membrane lipids and voltage rather than by extracellular calcium levels. The polypeptide is Calcium homeostasis modulator protein 6 (Rattus norvegicus (Rat)).